Consider the following 326-residue polypeptide: tRNA-modifying protein YgfZ (326 aa).

Positions 27 and 189 each coordinate folate.

It belongs to the tRNA-modifying YgfZ family.

The protein localises to the cytoplasm. Functionally, folate-binding protein involved in regulating the level of ATP-DnaA and in the modification of some tRNAs. It is probably a key factor in regulatory networks that act via tRNA modification, such as initiation of chromosomal replication. This chain is tRNA-modifying protein YgfZ, found in Escherichia coli O6:K15:H31 (strain 536 / UPEC).